The primary structure comprises 719 residues: Protein lin-15A (719 aa).

4 disordered regions span residues 179 to 199, 419 to 464, 559 to 626, and 684 to 719; these read FSHF…EGSQ, YRDH…SISW, LTTA…PTKT, and AKQV…EPIF. Over residues 570–579 the composition is skewed to low complexity; the sequence is STSTDSSSSS. The segment covering 604–617 has biased composition (polar residues); it reads LLQNKPTHVESSSP. Positions 693–719 are enriched in basic and acidic residues; it reads EPKHIPPTHMEKKPEELLMDPKPEPIF.

The protein resides in the nucleus. Synthetic multivulva (synMuv) class A protein. SynMuv proteins are required to repress the induction of vulval development. Acts redundantly with SynMuv class B protein lin-15B, and lin-35 to negatively regulate vulval development, most likely through antagonization of the Ras-signaling pathway. May also negatively regulate vulval development in association with other SynMuv class B proteins such as dpl-1 and efl-1. Regulates let-23 basal activity. Required for the correct expression and/or stability of lin-56. The sequence is that of Protein lin-15A from Caenorhabditis elegans.